A 198-amino-acid chain; its full sequence is Recombination protein RecR (198 aa).

Residues 57–72 form a C4-type zinc finger; sequence CSICGNLTDDDPCHIC. Residues 80-175 form the Toprim domain; the sequence is ETILVVEASK…KVTRLARGLA (96 aa).

It belongs to the RecR family.

Its function is as follows. May play a role in DNA repair. It seems to be involved in an RecBC-independent recombinational process of DNA repair. It may act with RecF and RecO. This is Recombination protein RecR from Streptococcus equi subsp. zooepidemicus (strain MGCS10565).